Here is a 436-residue protein sequence, read N- to C-terminus: Glutamyl-tRNA reductase (436 aa).

Residues 49-52, S109, 114-116, and Q120 each bind substrate; these read TCNR and EGQ. C50 (nucleophile) is an active-site residue. 198 to 203 is an NADP(+) binding site; the sequence is GAGRMS.

The protein belongs to the glutamyl-tRNA reductase family. Homodimer.

It carries out the reaction (S)-4-amino-5-oxopentanoate + tRNA(Glu) + NADP(+) = L-glutamyl-tRNA(Glu) + NADPH + H(+). It functions in the pathway porphyrin-containing compound metabolism; protoporphyrin-IX biosynthesis; 5-aminolevulinate from L-glutamyl-tRNA(Glu): step 1/2. It participates in porphyrin-containing compound metabolism; chlorophyll biosynthesis. Functionally, catalyzes the NADPH-dependent reduction of glutamyl-tRNA(Glu) to glutamate 1-semialdehyde (GSA). The protein is Glutamyl-tRNA reductase of Prochlorococcus marinus (strain MIT 9215).